Here is a 216-residue protein sequence, read N- to C-terminus: ATP phosphoribosyltransferase (216 aa).

This sequence belongs to the ATP phosphoribosyltransferase family. Short subfamily. As to quaternary structure, heteromultimer composed of HisG and HisZ subunits.

It is found in the cytoplasm. It carries out the reaction 1-(5-phospho-beta-D-ribosyl)-ATP + diphosphate = 5-phospho-alpha-D-ribose 1-diphosphate + ATP. It functions in the pathway amino-acid biosynthesis; L-histidine biosynthesis; L-histidine from 5-phospho-alpha-D-ribose 1-diphosphate: step 1/9. Functionally, catalyzes the condensation of ATP and 5-phosphoribose 1-diphosphate to form N'-(5'-phosphoribosyl)-ATP (PR-ATP). Has a crucial role in the pathway because the rate of histidine biosynthesis seems to be controlled primarily by regulation of HisG enzymatic activity. The protein is ATP phosphoribosyltransferase of Thiobacillus denitrificans (strain ATCC 25259 / T1).